Reading from the N-terminus, the 487-residue chain is Aspartyl/glutamyl-tRNA(Asn/Gln) amidotransferase subunit B (487 aa).

It belongs to the GatB/GatE family. GatB subfamily. Heterotrimer of A, B and C subunits.

The catalysed reaction is L-glutamyl-tRNA(Gln) + L-glutamine + ATP + H2O = L-glutaminyl-tRNA(Gln) + L-glutamate + ADP + phosphate + H(+). The enzyme catalyses L-aspartyl-tRNA(Asn) + L-glutamine + ATP + H2O = L-asparaginyl-tRNA(Asn) + L-glutamate + ADP + phosphate + 2 H(+). Its function is as follows. Allows the formation of correctly charged Asn-tRNA(Asn) or Gln-tRNA(Gln) through the transamidation of misacylated Asp-tRNA(Asn) or Glu-tRNA(Gln) in organisms which lack either or both of asparaginyl-tRNA or glutaminyl-tRNA synthetases. The reaction takes place in the presence of glutamine and ATP through an activated phospho-Asp-tRNA(Asn) or phospho-Glu-tRNA(Gln). The protein is Aspartyl/glutamyl-tRNA(Asn/Gln) amidotransferase subunit B of Chlamydia caviae (strain ATCC VR-813 / DSM 19441 / 03DC25 / GPIC) (Chlamydophila caviae).